The sequence spans 460 residues: tRNA modification GTPase MnmE (460 aa).

Residues Arg-23, Glu-86, and Arg-126 each contribute to the (6S)-5-formyl-5,6,7,8-tetrahydrofolate site. The region spanning Gly-222–Phe-381 is the TrmE-type G domain. Position 232 (Asn-232) interacts with K(+). GTP is bound by residues Asn-232–Ser-237, Thr-251–Thr-257, and Asp-276–Gly-279. Position 236 (Ser-236) interacts with Mg(2+). Residues Thr-251, Ile-253, and Thr-256 each contribute to the K(+) site. Thr-257 lines the Mg(2+) pocket. Lys-460 serves as a coordination point for (6S)-5-formyl-5,6,7,8-tetrahydrofolate.

The protein belongs to the TRAFAC class TrmE-Era-EngA-EngB-Septin-like GTPase superfamily. TrmE GTPase family. As to quaternary structure, homodimer. Heterotetramer of two MnmE and two MnmG subunits. Requires K(+) as cofactor.

It is found in the cytoplasm. Exhibits a very high intrinsic GTPase hydrolysis rate. Involved in the addition of a carboxymethylaminomethyl (cmnm) group at the wobble position (U34) of certain tRNAs, forming tRNA-cmnm(5)s(2)U34. This is tRNA modification GTPase MnmE from Exiguobacterium sibiricum (strain DSM 17290 / CCUG 55495 / CIP 109462 / JCM 13490 / 255-15).